The sequence spans 203 residues: MIGRLRGIILEKQPPIVLLETGGVGYEVHMPMTCFYELPEAGQEAIVFTHFVVREDAQLLYGFNNKQERTLFKELIKTNGVGPKLALAILSGMSAQQFVNAVEREELGALVKLPGIGKKTAERLIVEMKDRFKGLHGDLFTPAVDLVLTSPASPGSEDAEQEAVAALVALGYKPQEASRMVSKIARPDASSETLIRDALRAAL.

The segment at 1–64 is domain I; sequence MIGRLRGIIL…EDAQLLYGFN (64 aa). The interval 65-142 is domain II; the sequence is NKQERTLFKE…KGLHGDLFTP (78 aa). Positions 143–154 are flexible linker; the sequence is AVDLVLTSPASP. Residues 155-203 are domain III; sequence GSEDAEQEAVAALVALGYKPQEASRMVSKIARPDASSETLIRDALRAAL.

It belongs to the RuvA family. In terms of assembly, homotetramer. Forms an RuvA(8)-RuvB(12)-Holliday junction (HJ) complex. HJ DNA is sandwiched between 2 RuvA tetramers; dsDNA enters through RuvA and exits via RuvB. An RuvB hexamer assembles on each DNA strand where it exits the tetramer. Each RuvB hexamer is contacted by two RuvA subunits (via domain III) on 2 adjacent RuvB subunits; this complex drives branch migration. In the full resolvosome a probable DNA-RuvA(4)-RuvB(12)-RuvC(2) complex forms which resolves the HJ.

The protein localises to the cytoplasm. Functionally, the RuvA-RuvB-RuvC complex processes Holliday junction (HJ) DNA during genetic recombination and DNA repair, while the RuvA-RuvB complex plays an important role in the rescue of blocked DNA replication forks via replication fork reversal (RFR). RuvA specifically binds to HJ cruciform DNA, conferring on it an open structure. The RuvB hexamer acts as an ATP-dependent pump, pulling dsDNA into and through the RuvAB complex. HJ branch migration allows RuvC to scan DNA until it finds its consensus sequence, where it cleaves and resolves the cruciform DNA. This is Holliday junction branch migration complex subunit RuvA from Salmonella schwarzengrund (strain CVM19633).